The chain runs to 433 residues: DNA polymerase processivity factor (433 aa).

Residues 274-433 (RGDPFDKNYV…VPNTKKQKCG (160 aa)) are disordered. Low complexity predominate over residues 298-307 (SLSSLANAGG). Gly residues-rich tracts occupy residues 325-336 (GLGGLGGGGGGG) and 344-359 (GGGG…GGGG). The span at 360–376 (GDHDHGLSSKEKYEQHK) shows a compositional bias: basic and acidic residues. Gly residues predominate over residues 385–398 (GGSGGGGGGGGGGL).

It belongs to the herpesviridae polymerase accessory protein family. Forms homodimers. Interacts with host SMARCB1. Interacts with host NCL/nucleolin; this interaction is important for the organization of proteins within viral replication compartments. Interacts with UL112/UL113; this interaction is necessary for efficient viral DNA replication. Interacts with UL84. Interacts with the uracil DNA glycosylase UL114. Interacts with the DNA polymerase catalytic subunit UL54. Interacts with host IRF3. Interacts with host RELA. In terms of processing, phosphorylated by UL97 on serine residues, phosphorylation seems important for UL44 nuclear entry but does not directly affect its role in replication. Post-translationally, sumoylated. Sumoylation on Lys-410 increases viral DNA replication.

The protein resides in the virion. It is found in the host nucleus. Accessory subunit of the DNA polymerase that plays an essential role in viral DNA replication and acts by increasing the processivity of polymerization. Forms dimers that binds to double-stranded DNA and UL54 specifically to stimulates long chain DNA synthesis efficiently. Plays an important role in maintaining the structure of viral replication compartments by interacting with host nucleolin/NUC. In addition, suppresses innate immune responses through effects on host IRF3 and NF-kappa-B. Mechanistically, interfere with the binding of IRF3 and the p65 NF-kappa-B subunit to the promoters of antiviral genes, thereby inhibiting the expression of these genes. The chain is DNA polymerase processivity factor (UL44) from Human cytomegalovirus (strain Merlin) (HHV-5).